A 312-amino-acid polypeptide reads, in one-letter code: Aspartate carbamoyltransferase catalytic subunit (312 aa).

Carbamoyl phosphate contacts are provided by arginine 58 and threonine 59. Lysine 86 contacts L-aspartate. Carbamoyl phosphate contacts are provided by arginine 108, histidine 136, and glutamine 139. L-aspartate contacts are provided by arginine 169 and arginine 223. 2 residues coordinate carbamoyl phosphate: glycine 264 and proline 265.

Belongs to the aspartate/ornithine carbamoyltransferase superfamily. ATCase family. In terms of assembly, heterododecamer (2C3:3R2) of six catalytic PyrB chains organized as two trimers (C3), and six regulatory PyrI chains organized as three dimers (R2).

The enzyme catalyses carbamoyl phosphate + L-aspartate = N-carbamoyl-L-aspartate + phosphate + H(+). The protein operates within pyrimidine metabolism; UMP biosynthesis via de novo pathway; (S)-dihydroorotate from bicarbonate: step 2/3. Its function is as follows. Catalyzes the condensation of carbamoyl phosphate and aspartate to form carbamoyl aspartate and inorganic phosphate, the committed step in the de novo pyrimidine nucleotide biosynthesis pathway. This is Aspartate carbamoyltransferase catalytic subunit from Syntrophomonas wolfei subsp. wolfei (strain DSM 2245B / Goettingen).